We begin with the raw amino-acid sequence, 370 residues long: GTPase Obg (370 aa).

One can recognise an Obg domain in the interval 1–159; that stretch reads MKFIDEARIE…RMLRLELKVL (159 aa). An OBG-type G domain is found at 160–334; that stretch reads ADVGLLGMPN…LCYAIYDYLA (175 aa). Residues 166–173, 191–195, 213–216, 284–287, and 315–317 each bind GTP; these read GMPNAGKS, FTTLA, DIPG, NKLD, and SAL. S173 and T193 together coordinate Mg(2+). The disordered stretch occupies residues 344–370; sequence EEEDLATDVRFRDAPPADGGATPGDDA.

Belongs to the TRAFAC class OBG-HflX-like GTPase superfamily. OBG GTPase family. In terms of assembly, monomer. Mg(2+) is required as a cofactor.

It is found in the cytoplasm. Its function is as follows. An essential GTPase which binds GTP, GDP and possibly (p)ppGpp with moderate affinity, with high nucleotide exchange rates and a fairly low GTP hydrolysis rate. Plays a role in control of the cell cycle, stress response, ribosome biogenesis and in those bacteria that undergo differentiation, in morphogenesis control. The chain is GTPase Obg from Burkholderia ambifaria (strain ATCC BAA-244 / DSM 16087 / CCUG 44356 / LMG 19182 / AMMD) (Burkholderia cepacia (strain AMMD)).